Reading from the N-terminus, the 474-residue chain is MSEELWQRCLTRLEDELPSQQFNMWIRPLQVAASADGAELTLFAPNRFVVDWVRDKYLDRISEVLGEMQSGPLPQLRLEVGSTRASTPAASYFNGSSSSSSNGPITTPAAAPAPRQPESDSRPQPTSLGGARKHRSNLNTGFTFSTFVEGKSNRMAAAAAQQVAENPASHGYNPLLLYGGVGLGKTHLMHAVGNELLRRNPNAKVVYLHSERFVADMISALRNKTINEFKRFYRSVDALLIDDIQFFAGKEQSQEEFFHTFNALLENGQQIILTCDKFPKEVDGLEERLKSRFGWGLSQPMEPPELETRVAILKKKAEEAKVDLPNDAAFFIAQRIRSNVRELEGALRRVIAHVRFTGAQIDIGLIKEALKDLIALQARQISIDNIQRIVAEYYKIKINDLLSPRRTRSVARPRQVAMALSKELTSHSLPEIGENFGGRDHTTVLHACRKVLELRESNPEIEEDYLNLLRTLTS.

Residues 1 to 91 are domain I, interacts with DnaA modulators; the sequence is MSEELWQRCL…STRASTPAAS (91 aa). The segment at 89 to 138 is disordered; that stretch reads AASYFNGSSSSSSNGPITTPAAAPAPRQPESDSRPQPTSLGGARKHRSNL. The domain II stretch occupies residues 91–136; sequence SYFNGSSSSSSNGPITTPAAAPAPRQPESDSRPQPTSLGGARKHRS. A compositionally biased stretch (low complexity) spans 96–113; the sequence is SSSSSSNGPITTPAAAPA. The segment at 137-354 is domain III, AAA+ region; that stretch reads NLNTGFTFST…GALRRVIAHV (218 aa). Positions 182, 184, 185, and 186 each coordinate ATP. The segment at 355–474 is domain IV, binds dsDNA; the sequence is RFTGAQIDIG…YLNLLRTLTS (120 aa).

Belongs to the DnaA family. In terms of assembly, oligomerizes as a right-handed, spiral filament on DNA at oriC.

It is found in the cytoplasm. Its function is as follows. Plays an essential role in the initiation and regulation of chromosomal replication. ATP-DnaA binds to the origin of replication (oriC) to initiate formation of the DNA replication initiation complex once per cell cycle. Binds the DnaA box (a 9 base pair repeat at the origin) and separates the double-stranded (ds)DNA. Forms a right-handed helical filament on oriC DNA; dsDNA binds to the exterior of the filament while single-stranded (ss)DNA is stabiized in the filament's interior. The ATP-DnaA-oriC complex binds and stabilizes one strand of the AT-rich DNA unwinding element (DUE), permitting loading of DNA polymerase. After initiation quickly degrades to an ADP-DnaA complex that is not apt for DNA replication. Binds acidic phospholipids. This chain is Chromosomal replication initiator protein DnaA, found in Alcanivorax borkumensis (strain ATCC 700651 / DSM 11573 / NCIMB 13689 / SK2).